Here is a 1827-residue protein sequence, read N- to C-terminus: Chromodomain-helicase-DNA-binding protein 2 (1827 aa).

The span at 1 to 14 shows a compositional bias: basic and acidic residues; the sequence is MMRNKDKSQEEDSS. Positions 1 to 264 are disordered; that stretch reads MMRNKDKSQE…EQQDNSETIE (264 aa). The segment covering 15 to 75 has biased composition (low complexity); that stretch reads LHSNASSRSA…SESESAGSKS (61 aa). Basic and acidic residues-rich tracts occupy residues 81–101, 115–128, and 146–155; these read EAKEKPASKKERIADVKKMWE, SRQEPSRFNVKEEA, and KKQEKWKQDP. Residues 175–204 show a composition bias toward basic residues; the sequence is GKARRPVPRRTVPKPQVKKQPKIQRGKRKK. Phosphoserine occurs at positions 207 and 208. The span at 234-258 shows a compositional bias: acidic residues; the sequence is EDDDFETDSDDLIEMTGEGGDEQQD. Phosphothreonine is present on Thr240. Ser242 carries the phosphoserine modification. Chromo domains lie at 261 to 353 and 378 to 456; these read ETIE…QWLG and QIVE…IPTR. In terms of domain architecture, Helicase ATP-binding spans 496–666; it reads AHSWCKSNSV…WSLLHFIMPE (171 aa). Position 509–516 (509–516) interacts with ATP; sequence DEMGLGKT. The short motif at 617–620 is the DEAH box element; sequence DEAH. The Helicase C-terminal domain occupies 795–946; sequence LLDKLLTRLR…HLVIQRMDTT (152 aa). 4 disordered regions span residues 1030–1124, 1329–1465, 1556–1638, and 1679–1827; these read EDEE…RSVR, GTVA…DDLD, HKKR…ADRG, and HMDA…VRKT. Positions 1037 to 1065 are enriched in basic and acidic residues; the sequence is ERPHKDWDEIIPEEQRKKVEEEERQKELE. Residues Ser1085, Ser1087, Ser1365, and Ser1386 each carry the phosphoserine modification. The segment covering 1347–1371 has biased composition (basic and acidic residues); sequence KKENKAPRLKDEHGLEPASPRHSDN. Composition is skewed to basic and acidic residues over residues 1396 to 1431 and 1565 to 1574; these read ENKENKEKPVSSRKDREGDKERKKSKDKKEKVKGGD and EQKKKDDSLG. The CHD1 helical C-terminal domain (CHCT) stretch occupies residues 1464-1566; it reads LDQETFSICK…KKRSQEEEEQ (103 aa). Polar residues predominate over residues 1584 to 1601; the sequence is SGSSRDSLISQSHTSHNL. 4 stretches are compositionally biased toward basic and acidic residues: residues 1697 to 1719, 1738 to 1748, 1759 to 1771, and 1794 to 1813; these read RPYEQYNSDRDHRGHRDYYDRHH, QDFRRMSDHRP, DHYRSFHTDKLGE, and SPHDSKSPLDHRSPLERSLE. Ser1806 is subject to Phosphoserine.

In terms of assembly, interacts with MYOD1. Interacts with histone H3.3. In terms of tissue distribution, widely expressed.

Its subcellular location is the nucleus. It carries out the reaction ATP + H2O = ADP + phosphate + H(+). Its function is as follows. ATP-dependent chromatin-remodeling factor that specifically binds to the promoter of target genes, leading to chromatin remodeling, possibly by promoting deposition of histone H3.3. Involved in myogenesis via interaction with MYOD1: binds to myogenic gene regulatory sequences and mediates incorporation of histone H3.3 prior to the onset of myogenic gene expression, promoting their expression. The protein is Chromodomain-helicase-DNA-binding protein 2 (Chd2) of Mus musculus (Mouse).